The chain runs to 748 residues: Cysteine--tRNA ligase, cytoplasmic (748 aa).

The tract at residues 1–25 (MAAAPAEQGKGKRVQPPWSPPEGTK) is disordered. Cysteine 55 contacts Zn(2+). Glycine 56 provides a ligand contact to L-cysteine. The 'HIGH' region motif lies at 57–67 (PTVYDASHMGH). Residue threonine 96 coordinates L-cysteine. The 'KIIK' region signature appears at 101–104 (KIIK). Residues cysteine 348, histidine 373, and glutamate 377 each coordinate Zn(2+). An L-cysteine-binding site is contributed by histidine 373. The 'KMSKS' region motif lies at 406-410 (KMSKS). ATP is bound at residue lysine 409. Basic and acidic residues-rich tracts occupy residues 656 to 679 (KIEE…EAAK) and 686 to 717 (PPHE…KELS). Residues 656-719 (KIEEEKKRKK…DTEGKELSKG (64 aa)) are disordered.

The protein belongs to the class-I aminoacyl-tRNA synthetase family. In terms of assembly, homodimer. Requires Zn(2+) as cofactor.

It localises to the cytoplasm. The catalysed reaction is tRNA(Cys) + L-cysteine + ATP = L-cysteinyl-tRNA(Cys) + AMP + diphosphate. In terms of biological role, catalyzes the ATP-dependent ligation of cysteine to tRNA(Cys). This Gallus gallus (Chicken) protein is Cysteine--tRNA ligase, cytoplasmic (CARS1).